A 99-amino-acid polypeptide reads, in one-letter code: uncharacterized protein (99 aa).

The helical transmembrane segment at 6-26 threads the bilayer; sequence LVCSIVFILFILFYDLKIGTI. The 48-residue stretch at 48 to 95 folds into the LysM domain; it reads KTVKVKPGDTVMSIVGSAGSPDDIVKDFEALNPNVKANAIQAGTAYKF.

It is found in the secreted. The protein localises to the cell wall. Its subcellular location is the membrane. This is an uncharacterized protein from Bacillus subtilis (strain 168).